We begin with the raw amino-acid sequence, 1012 residues long: Isoleucine--tRNA ligase, mitochondrial (1012 aa).

A mitochondrion-targeting transit peptide spans 1–48 (MHWGLCPRGPGAAAVAAAGSFWGPARLPSRLGCLGMTRRLVVRSVAGA). Lys-56 carries the N6-succinyllysine modification. Position 74 is an N6-acetyllysine; alternate (Lys-74). Position 74 is an N6-succinyllysine; alternate (Lys-74). Residues 116-126 (PYANGDPHVGH) carry the 'HIGH' region motif. Lys-194 carries the post-translational modification N6-succinyllysine. Position 233 is an N6-acetyllysine (Lys-233). An N6-acetyllysine; alternate modification is found at Lys-241. Lys-241 carries the N6-succinyllysine; alternate modification. 2 positions are modified to N6-succinyllysine: Lys-479 and Lys-500. Residues Lys-664 and Lys-667 each coordinate ATP. The short motif at 664-668 (KMSKS) is the 'KMSKS' region element. An N6-acetyllysine modification is found at Lys-725. 2 positions are modified to N6-acetyllysine; alternate: Lys-775 and Lys-781. 2 positions are modified to N6-succinyllysine; alternate: Lys-775 and Lys-781.

This sequence belongs to the class-I aminoacyl-tRNA synthetase family.

The protein resides in the mitochondrion matrix. It carries out the reaction tRNA(Ile) + L-isoleucine + ATP = L-isoleucyl-tRNA(Ile) + AMP + diphosphate. Aminoacyl-tRNA synthetase that catalyzes the specific attachment of isoleucine to its cognate tRNA (tRNA(Ile)). This chain is Isoleucine--tRNA ligase, mitochondrial, found in Mus musculus (Mouse).